A 489-amino-acid polypeptide reads, in one-letter code: NADH-quinone oxidoreductase subunit N (489 aa).

A run of 14 helical transmembrane segments spans residues 8–28, 35–55, 75–95, 105–125, 127–147, 159–179, 203–223, 235–255, 271–291, 303–323, 329–349, 374–394, 407–427, and 456–476; these read LIAM…MLSI, FTIA…LYYV, FFTA…YPWL, FYML…AHHL, SMFI…GYAF, YMLL…LLYA, VLAG…LFPF, PAPT…AVVM, MILG…ALTQ, VSHL…PILA, IYLA…AVAS, AVVM…LGFI, SLWW…FYYL, and LITL…QPLI.

The protein belongs to the complex I subunit 2 family. NDH-1 is composed of 13 different subunits. Subunits NuoA, H, J, K, L, M, N constitute the membrane sector of the complex.

The protein resides in the cell inner membrane. It carries out the reaction a quinone + NADH + 5 H(+)(in) = a quinol + NAD(+) + 4 H(+)(out). Its function is as follows. NDH-1 shuttles electrons from NADH, via FMN and iron-sulfur (Fe-S) centers, to quinones in the respiratory chain. The immediate electron acceptor for the enzyme in this species is believed to be ubiquinone. Couples the redox reaction to proton translocation (for every two electrons transferred, four hydrogen ions are translocated across the cytoplasmic membrane), and thus conserves the redox energy in a proton gradient. This Proteus mirabilis (strain HI4320) protein is NADH-quinone oxidoreductase subunit N.